The following is a 180-amino-acid chain: ATP-dependent protease subunit HslV (180 aa).

Residue Thr-5 is part of the active site. Na(+) is bound by residues Gly-165, Cys-168, and Thr-171.

It belongs to the peptidase T1B family. HslV subfamily. In terms of assembly, a double ring-shaped homohexamer of HslV is capped on each side by a ring-shaped HslU homohexamer. The assembly of the HslU/HslV complex is dependent on binding of ATP.

Its subcellular location is the cytoplasm. It carries out the reaction ATP-dependent cleavage of peptide bonds with broad specificity.. With respect to regulation, allosterically activated by HslU binding. Functionally, protease subunit of a proteasome-like degradation complex believed to be a general protein degrading machinery. This Helicobacter pylori (strain HPAG1) protein is ATP-dependent protease subunit HslV.